The chain runs to 680 residues: DNA-directed RNA polymerase subunit beta' (680 aa).

Residues Cys-69, Cys-71, Cys-87, and Cys-90 each contribute to the Zn(2+) site. Mg(2+) is bound by residues Asp-489, Asp-491, and Asp-493.

This sequence belongs to the RNA polymerase beta' chain family. RpoC1 subfamily. In terms of assembly, in plastids the minimal PEP RNA polymerase catalytic core is composed of four subunits: alpha, beta, beta', and beta''. When a (nuclear-encoded) sigma factor is associated with the core the holoenzyme is formed, which can initiate transcription. It depends on Mg(2+) as a cofactor. Zn(2+) serves as cofactor.

The protein localises to the plastid. It localises to the chloroplast. The catalysed reaction is RNA(n) + a ribonucleoside 5'-triphosphate = RNA(n+1) + diphosphate. Functionally, DNA-dependent RNA polymerase catalyzes the transcription of DNA into RNA using the four ribonucleoside triphosphates as substrates. This is DNA-directed RNA polymerase subunit beta' from Arabis hirsuta (Hairy rock-cress).